A 193-amino-acid chain; its full sequence is Ferredoxin-2, mitochondrial (193 aa).

The segment at 38–70 (QATPEKLETSNEEEGSSSAQITAGVESDAENQR) is disordered. The 103-residue stretch at 78–180 (VEVVFLDRSG…GAEFTLPKIT (103 aa)) folds into the 2Fe-2S ferredoxin-type domain. The [2Fe-2S] cluster site is built by C115, C121, C124, and C161.

This sequence belongs to the adrenodoxin/putidaredoxin family. In terms of assembly, component of the mitochondrial core iron-sulfur cluster (ISC) complex composed of NFS1, LYRM4, NDUFAB1, ISCU, FXN, and FDX2; this complex is a heterohexamer containing two copies of each monomer. Requires [2Fe-2S] cluster as cofactor.

The protein localises to the mitochondrion. It localises to the mitochondrion matrix. Its function is as follows. Electron donor, of the core iron-sulfur cluster (ISC) assembly complex, that acts to reduce the persulfide into sulfide during [2Fe-2S] clusters assembly on the scaffolding protein ISCU. The core iron-sulfur cluster (ISC) assembly complex is involved in the de novo synthesis of a [2Fe-2S] cluster, the first step of the mitochondrial iron-sulfur protein biogenesis. This process is initiated by the cysteine desulfurase complex (NFS1:LYRM4:NDUFAB1) that produces persulfide which is delivered on the scaffold protein ISCU in a FXN-dependent manner. Then this complex is stabilized by FDX2 which provides reducing equivalents to accomplish the [2Fe-2S] cluster assembly. Finally, the [2Fe-2S] cluster is transferred from ISCU to chaperone proteins, including HSCB, HSPA9 and GLRX5. Essential for coenzyme Q biosynthesis: together with FDXR, transfers the electrons required for the hydroxylation reaction performed by COQ6. The protein is Ferredoxin-2, mitochondrial of Xenopus laevis (African clawed frog).